The sequence spans 505 residues: Glutamate--tRNA ligase (505 aa).

A 'HIGH' region motif is present at residues 12 to 22 (PSPTGDPHVGT). Residues 253–257 (KLSKR) carry the 'KMSKS' region motif. Residue lysine 256 participates in ATP binding.

Belongs to the class-I aminoacyl-tRNA synthetase family. Glutamate--tRNA ligase type 1 subfamily. As to quaternary structure, monomer.

The protein resides in the cytoplasm. The catalysed reaction is tRNA(Glu) + L-glutamate + ATP = L-glutamyl-tRNA(Glu) + AMP + diphosphate. In terms of biological role, catalyzes the attachment of glutamate to tRNA(Glu) in a two-step reaction: glutamate is first activated by ATP to form Glu-AMP and then transferred to the acceptor end of tRNA(Glu). This Chlamydia abortus (strain DSM 27085 / S26/3) (Chlamydophila abortus) protein is Glutamate--tRNA ligase.